A 433-amino-acid chain; its full sequence is Polygalacturonase ADPG2 (433 aa).

An N-terminal signal peptide occupies residues 1 to 24 (MARCTNLVTVFLLWALLMFSWCKA). PbH1 repeat units lie at residues 223-249 (CSNV…HITN), 250-271 (TQNI…SIES), 273-293 (SQNV…SIGS), 303-324 (VSGV…RIKT), and 332-353 (ASNI…IIDQ). D264 functions as the Proton donor in the catalytic mechanism. Residue H287 is part of the active site.

The protein belongs to the glycosyl hydrolase 28 family. Expressed in roots and in the abscission zone of the sepals, petals and stamens of flowers, at the base of cauline leaves and in the basal cell of trichomes from senescing leaves. Found at the site of lateral root emergence, in the dehiscence zone of anthers and maturing siliques. Also expressed early in anther development, at the time of microspore separation. Expressed in germinating seeds, at the point at which the radicle broke through the seed coat. Not expressed at the junction between the seed and the funiculus or in the dehiscence zone of anthers or pods.

It is found in the secreted. The protein resides in the cell wall. It catalyses the reaction (1,4-alpha-D-galacturonosyl)n+m + H2O = (1,4-alpha-D-galacturonosyl)n + (1,4-alpha-D-galacturonosyl)m.. Its function is as follows. Polygalacturonase involved in cell separation in the final stages of pod shatter, in anther dehiscence and in floral organ abscission. The sequence is that of Polygalacturonase ADPG2 (ADPG2) from Arabidopsis thaliana (Mouse-ear cress).